A 148-amino-acid polypeptide reads, in one-letter code: uncharacterized protein (148 aa).

It belongs to the IIV-6 395R family.

This is an uncharacterized protein from Aedes vexans (Inland floodwater mosquito).